Here is a 465-residue protein sequence, read N- to C-terminus: G1/S-specific cyclin CLN2 (465 aa).

This sequence belongs to the cyclin family.

Essential for the control of the cell cycle at the G1/S (start) transition. Interacts with the CDC28 protein kinase to form MPF. This Candida albicans (Yeast) protein is G1/S-specific cyclin CLN2 (CLN2).